The chain runs to 224 residues: uncharacterized protein (224 aa).

7 residues coordinate Zn(2+): histidine 57, histidine 59, aspartate 61, histidine 62, histidine 138, aspartate 162, and histidine 203.

The protein belongs to the metallo-beta-lactamase superfamily. Glyoxalase II family. Zn(2+) serves as cofactor.

This is an uncharacterized protein from Mycobacterium tuberculosis (strain CDC 1551 / Oshkosh).